The primary structure comprises 521 residues: MAKITRALISVSDKTGILDFARELAGYGVEILSTGGTAKLLRDAGLAVKDVSDFTGFPEMLDGRVKTLHPKVHGGLLGMRSNPDHVATMKAHGIEPIDLVVVNLYPFEATVAKPECTLEDAIENIDIGGPTMLRSAAKNNADVTVLVDPADYRPVLDEMKASGGAVSRETNFCLAVKVYQHTAAYDGAISNWLGARTGEGIAAYPDTVTLQFRKAQEMRYGENPHQGAAFYVERQVKEASVATARQLQGKELSYNNIADTDAALECVKQFAEGPACVIVKHANPCGVAVGGTLLEAYDRAYATDPESAFGGIIAFNRELDADTARAICDRQFVEVIIAPAVSPEATEVVAAKKNVRLLECGTWPEKQQPRLDLKRVNGGILVQDTDLDLYAELKVVTKRQPTEQEMKDLLFAWRVAKFVKSNAIVYGKGNMTIGVGAGQMSRVNSARIAAIKAEHAGLEVKGAVMASDAFFPFRDGIDNAAAVGITAVIQPGGSMRDAEVIAAADEHGMAMVFTGMRHFRH.

Residues 1–147 (MAKITRALIS…KNNADVTVLV (147 aa)) enclose the MGS-like domain.

The protein belongs to the PurH family.

The enzyme catalyses (6R)-10-formyltetrahydrofolate + 5-amino-1-(5-phospho-beta-D-ribosyl)imidazole-4-carboxamide = 5-formamido-1-(5-phospho-D-ribosyl)imidazole-4-carboxamide + (6S)-5,6,7,8-tetrahydrofolate. The catalysed reaction is IMP + H2O = 5-formamido-1-(5-phospho-D-ribosyl)imidazole-4-carboxamide. Its pathway is purine metabolism; IMP biosynthesis via de novo pathway; 5-formamido-1-(5-phospho-D-ribosyl)imidazole-4-carboxamide from 5-amino-1-(5-phospho-D-ribosyl)imidazole-4-carboxamide (10-formyl THF route): step 1/1. It functions in the pathway purine metabolism; IMP biosynthesis via de novo pathway; IMP from 5-formamido-1-(5-phospho-D-ribosyl)imidazole-4-carboxamide: step 1/1. This Geobacter sulfurreducens (strain ATCC 51573 / DSM 12127 / PCA) protein is Bifunctional purine biosynthesis protein PurH.